We begin with the raw amino-acid sequence, 326 residues long: Biotin synthase (326 aa).

Positions 40–264 (GQVQACTLVS…VLPRSYVRLA (225 aa)) constitute a Radical SAM core domain. Residues Cys-55, Cys-59, and Cys-62 each coordinate [4Fe-4S] cluster. Cys-99, Cys-130, Cys-190, and Arg-262 together coordinate [2Fe-2S] cluster.

The protein belongs to the radical SAM superfamily. Biotin synthase family. As to quaternary structure, homodimer. [4Fe-4S] cluster serves as cofactor. The cofactor is [2Fe-2S] cluster.

It catalyses the reaction (4R,5S)-dethiobiotin + (sulfur carrier)-SH + 2 reduced [2Fe-2S]-[ferredoxin] + 2 S-adenosyl-L-methionine = (sulfur carrier)-H + biotin + 2 5'-deoxyadenosine + 2 L-methionine + 2 oxidized [2Fe-2S]-[ferredoxin]. It participates in cofactor biosynthesis; biotin biosynthesis; biotin from 7,8-diaminononanoate: step 2/2. Its function is as follows. Catalyzes the conversion of dethiobiotin (DTB) to biotin by the insertion of a sulfur atom into dethiobiotin via a radical-based mechanism. This Halorhodospira halophila (strain DSM 244 / SL1) (Ectothiorhodospira halophila (strain DSM 244 / SL1)) protein is Biotin synthase.